The chain runs to 218 residues: Ribose-5-phosphate isomerase A (218 aa).

Substrate-binding positions include Lys7, 28-31 (TGST), 81-84 (DGAD), and 94-97 (KGGG). Glu103 acts as the Proton acceptor in catalysis. Lys121 serves as a coordination point for substrate.

The protein belongs to the ribose 5-phosphate isomerase family. As to quaternary structure, homodimer.

The catalysed reaction is aldehydo-D-ribose 5-phosphate = D-ribulose 5-phosphate. It functions in the pathway carbohydrate degradation; pentose phosphate pathway; D-ribose 5-phosphate from D-ribulose 5-phosphate (non-oxidative stage): step 1/1. Functionally, catalyzes the reversible conversion of ribose-5-phosphate to ribulose 5-phosphate. The chain is Ribose-5-phosphate isomerase A from Vibrio vulnificus (strain YJ016).